Reading from the N-terminus, the 471-residue chain is MKVKTRFAPSPTGFLHVGGARTALYSWLFAKNQGGEFVLRIEDTDLERSTQEAIDAIIEGMEWLELNWDEGPYYQTKRFDRYNGLIDEMLADGRAYKCYCSKERLEALREGQMANGEKPRYDGKCRDHAHDHPADAPHVIRFRNPTEGSVVFDDHVRGRIEFANTELDDLIIRRTDGAPTYNFCVVVDDWDMEITHVVRGEDHINNTPRQINIYKALNAPVPEFAHVSMILGDDGAKLSKRHGAVSVMQYRDDGYLPEALLNYLVRLGWSHGDQEIFSLEEMIKLFSLDAISKSASAFNTDKLLWLNNHYMRSLDPAYVAKHLAWHMADQKIDTSKGPALADVVTLLAERCNTLVEMAAQSRYLFEEYEAIDEAAAKKHLRGVAAEPLTLAKAKLAALDSWTTEALHELIEATAAELGQGMGKVGMPLRVAVTGLGQSPGIDAVMALVGKERVLARIDRALAYIEARMAAE.

Residues proline 9 to glycine 19 carry the 'HIGH' region motif. The Zn(2+) site is built by cysteine 98, cysteine 100, cysteine 125, and aspartate 127. The 'KMSKS' region motif lies at lysine 237–arginine 241. Residue lysine 240 participates in ATP binding.

The protein belongs to the class-I aminoacyl-tRNA synthetase family. Glutamate--tRNA ligase type 1 subfamily. In terms of assembly, monomer. The cofactor is Zn(2+).

The protein resides in the cytoplasm. It carries out the reaction tRNA(Glu) + L-glutamate + ATP = L-glutamyl-tRNA(Glu) + AMP + diphosphate. In terms of biological role, catalyzes the attachment of glutamate to tRNA(Glu) in a two-step reaction: glutamate is first activated by ATP to form Glu-AMP and then transferred to the acceptor end of tRNA(Glu). In Aeromonas hydrophila subsp. hydrophila (strain ATCC 7966 / DSM 30187 / BCRC 13018 / CCUG 14551 / JCM 1027 / KCTC 2358 / NCIMB 9240 / NCTC 8049), this protein is Glutamate--tRNA ligase.